A 584-amino-acid polypeptide reads, in one-letter code: Probable DNA ligase (584 aa).

Glu248 is a binding site for ATP. Lys250 functions as the N6-AMP-lysine intermediate in the catalytic mechanism. Positions 255, 270, 299, 339, 416, and 422 each coordinate ATP.

Belongs to the ATP-dependent DNA ligase family. Mg(2+) is required as a cofactor.

It catalyses the reaction ATP + (deoxyribonucleotide)n-3'-hydroxyl + 5'-phospho-(deoxyribonucleotide)m = (deoxyribonucleotide)n+m + AMP + diphosphate.. Functionally, DNA ligase that seals nicks in double-stranded DNA during DNA replication, DNA recombination and DNA repair. The protein is Probable DNA ligase of Aquifex aeolicus (strain VF5).